A 550-amino-acid polypeptide reads, in one-letter code: Protein UshA (550 aa).

The N-terminal stretch at Met1 to Ala25 is a signal peptide. Positions 41, 43, 84, 116, 217, 252, and 254 each coordinate Zn(2+). An intrachain disulfide couples Cys258 to Cys275. Residues Arg375–Arg379 and Phe498–Asp504 each bind substrate.

It belongs to the 5'-nucleotidase family. As to quaternary structure, monomer. Zn(2+) is required as a cofactor.

Its subcellular location is the periplasm. It carries out the reaction UDP-sugar + H2O = UMP + alpha-D-aldose 1-phosphate.. It catalyses the reaction a ribonucleoside 5'-phosphate + H2O = a ribonucleoside + phosphate. The activity of this protein is inhibited by an intracellular protein inhibitor. In terms of biological role, degradation of external UDP-glucose to uridine monophosphate and glucose-1-phosphate, which can then be used by the cell. The chain is Protein UshA (ushA) from Escherichia coli (strain K12).